The primary structure comprises 424 residues: Serine--tRNA ligase (424 aa).

231–233 lines the L-serine pocket; it reads TAE. 262–264 provides a ligand contact to ATP; it reads RSE. Position 285 (Glu285) interacts with L-serine. 349–352 is an ATP binding site; the sequence is EISS. Position 385 (Ser385) interacts with L-serine.

Belongs to the class-II aminoacyl-tRNA synthetase family. Type-1 seryl-tRNA synthetase subfamily. As to quaternary structure, homodimer. The tRNA molecule binds across the dimer.

The protein resides in the cytoplasm. It catalyses the reaction tRNA(Ser) + L-serine + ATP = L-seryl-tRNA(Ser) + AMP + diphosphate + H(+). The enzyme catalyses tRNA(Sec) + L-serine + ATP = L-seryl-tRNA(Sec) + AMP + diphosphate + H(+). Its pathway is aminoacyl-tRNA biosynthesis; selenocysteinyl-tRNA(Sec) biosynthesis; L-seryl-tRNA(Sec) from L-serine and tRNA(Sec): step 1/1. Catalyzes the attachment of serine to tRNA(Ser). Is also able to aminoacylate tRNA(Sec) with serine, to form the misacylated tRNA L-seryl-tRNA(Sec), which will be further converted into selenocysteinyl-tRNA(Sec). The chain is Serine--tRNA ligase from Bacillus cereus (strain ZK / E33L).